A 90-amino-acid polypeptide reads, in one-letter code: Protein RL8A (90 aa).

A helical membrane pass occupies residues 15-34; the sequence is WTCEGLLLLLGLLVLFFHHH. The segment at 55–90 is disordered; the sequence is HESGWYSSDDDGDRDGDEETGESHNRNSVGLSAVFS. Over residues 62-74 the composition is skewed to acidic residues; the sequence is SDDDGDRDGDEET. The span at 80 to 90 shows a compositional bias: polar residues; the sequence is RNSVGLSAVFS.

It localises to the host membrane. This is Protein RL8A (RL8A) from Homo sapiens (Human).